Here is a 675-residue protein sequence, read N- to C-terminus: Methionine--tRNA ligase (675 aa).

A 'HIGH' region motif is present at residues P15–H25. Zn(2+) is bound by residues C146, C149, C159, and C162. A 'KMSKS' region motif is present at residues K331–S335. ATP is bound at residue K334. The region spanning D574–K675 is the tRNA-binding domain.

This sequence belongs to the class-I aminoacyl-tRNA synthetase family. MetG type 1 subfamily. As to quaternary structure, homodimer. Requires Zn(2+) as cofactor.

Its subcellular location is the cytoplasm. The enzyme catalyses tRNA(Met) + L-methionine + ATP = L-methionyl-tRNA(Met) + AMP + diphosphate. Is required not only for elongation of protein synthesis but also for the initiation of all mRNA translation through initiator tRNA(fMet) aminoacylation. This is Methionine--tRNA ligase from Pseudoalteromonas atlantica (strain T6c / ATCC BAA-1087).